A 576-amino-acid chain; its full sequence is RNA-binding post-transcriptional regulator cip2 (576 aa).

Positions 232-310 (TAIVIKNIPF…RRLRVEWKRQ (79 aa)) constitute an RRM domain. Positions 355–420 (DPAILNVYSH…AKQVVITMPS (66 aa)) constitute an R3H domain.

Interacts with csx1. Phosphorylated by sty1.

It localises to the cytoplasm. In terms of biological role, regulates global gene expression after oxidative stress. Interacts and stabilizes mRNAs and may regulate their transition between different cytoplasmic components after oxidative stress. This chain is RNA-binding post-transcriptional regulator cip2 (cip2), found in Schizosaccharomyces pombe (strain 972 / ATCC 24843) (Fission yeast).